A 296-amino-acid polypeptide reads, in one-letter code: Centromere protein O (296 aa).

Residues 17-105 (VLAHLERLET…NMKAILQAYR (89 aa)) are a coiled coil.

The protein belongs to the CENP-O/MCM21 family. Component of the CENPA-CAD complex, composed of CENPI, CENPK, CENPL, CENPO, CENPP, CENPQ, CENPR and CENPS. The CENPA-CAD complex interacts with the CENPA-NAC complex, at least composed of CENPA, CENPC, CENPH, CENPM, CENPN, CENPT and CENPU.

It is found in the nucleus. It localises to the chromosome. The protein resides in the centromere. Its subcellular location is the kinetochore. In terms of biological role, component of the CENPA-CAD (nucleosome distal) complex, a complex recruited to centromeres which is involved in assembly of kinetochore proteins, mitotic progression and chromosome segregation. May be involved in incorporation of newly synthesized CENPA into centromeres via its interaction with the CENPA-NAC complex. Modulates the kinetochore-bound levels of NDC80 complex. In Bos taurus (Bovine), this protein is Centromere protein O (CENPO).